The following is a 226-amino-acid chain: tRNA (guanine-N(7)-)-methyltransferase (226 aa).

Residues glutamate 59, glutamate 84, aspartate 111, and aspartate 134 each contribute to the S-adenosyl-L-methionine site. Aspartate 134 is a catalytic residue. Lysine 138 provides a ligand contact to substrate. Positions 140 to 145 (RHNKRR) are interaction with RNA. Substrate is bound by residues aspartate 170 and 205–208 (TKFE).

This sequence belongs to the class I-like SAM-binding methyltransferase superfamily. TrmB family.

The enzyme catalyses guanosine(46) in tRNA + S-adenosyl-L-methionine = N(7)-methylguanosine(46) in tRNA + S-adenosyl-L-homocysteine. It functions in the pathway tRNA modification; N(7)-methylguanine-tRNA biosynthesis. Catalyzes the formation of N(7)-methylguanine at position 46 (m7G46) in tRNA. This is tRNA (guanine-N(7)-)-methyltransferase from Chromobacterium violaceum (strain ATCC 12472 / DSM 30191 / JCM 1249 / CCUG 213 / NBRC 12614 / NCIMB 9131 / NCTC 9757 / MK).